Here is a 132-residue protein sequence, read N- to C-terminus: Small ribosomal subunit protein uS8 (132 aa).

This sequence belongs to the universal ribosomal protein uS8 family. In terms of assembly, part of the 30S ribosomal subunit. Contacts proteins S5 and S12.

Its function is as follows. One of the primary rRNA binding proteins, it binds directly to 16S rRNA central domain where it helps coordinate assembly of the platform of the 30S subunit. The polypeptide is Small ribosomal subunit protein uS8 (Rickettsia conorii (strain ATCC VR-613 / Malish 7)).